A 429-amino-acid polypeptide reads, in one-letter code: Adenylosuccinate synthetase (429 aa).

GTP is bound by residues 12–18 (GDEGKGK) and 40–42 (GHT). The active-site Proton acceptor is the D13. 2 residues coordinate Mg(2+): D13 and G40. Residues 13 to 16 (DEGK), 38 to 41 (NAGH), T129, R143, Q223, T238, and R302 each bind IMP. Residue H41 is the Proton donor of the active site. 298 to 304 (TVTGRKR) lines the substrate pocket. GTP contacts are provided by residues R304, 330-332 (KLD), and 412-414 (STS).

This sequence belongs to the adenylosuccinate synthetase family. In terms of assembly, homodimer. Requires Mg(2+) as cofactor.

The protein localises to the cytoplasm. The catalysed reaction is IMP + L-aspartate + GTP = N(6)-(1,2-dicarboxyethyl)-AMP + GDP + phosphate + 2 H(+). The protein operates within purine metabolism; AMP biosynthesis via de novo pathway; AMP from IMP: step 1/2. Functionally, plays an important role in the de novo pathway of purine nucleotide biosynthesis. Catalyzes the first committed step in the biosynthesis of AMP from IMP. This chain is Adenylosuccinate synthetase, found in Sphingopyxis alaskensis (strain DSM 13593 / LMG 18877 / RB2256) (Sphingomonas alaskensis).